Reading from the N-terminus, the 383-residue chain is Putative F-box protein At3g22650 (383 aa).

One can recognise an F-box domain in the interval Ser-3 to Leu-50.

In Arabidopsis thaliana (Mouse-ear cress), this protein is Putative F-box protein At3g22650.